The following is a 148-amino-acid chain: 3-hydroxyacyl-[acyl-carrier-protein] dehydratase FabZ (148 aa).

H49 is a catalytic residue.

Belongs to the thioester dehydratase family. FabZ subfamily.

It is found in the cytoplasm. The enzyme catalyses a (3R)-hydroxyacyl-[ACP] = a (2E)-enoyl-[ACP] + H2O. Functionally, involved in unsaturated fatty acids biosynthesis. Catalyzes the dehydration of short chain beta-hydroxyacyl-ACPs and long chain saturated and unsaturated beta-hydroxyacyl-ACPs. The polypeptide is 3-hydroxyacyl-[acyl-carrier-protein] dehydratase FabZ (Ehrlichia canis (strain Jake)).